The sequence spans 166 residues: Phosphopantetheine adenylyltransferase (166 aa).

Ser-9 lines the substrate pocket. ATP is bound by residues 9–10 (SF) and His-17. Residues Lys-41, Thr-74, and Arg-88 each contribute to the substrate site. Residues 89–91 (GLR), Glu-99, and 124–130 (DSFISSS) contribute to the ATP site.

It belongs to the bacterial CoaD family. Homohexamer. Mg(2+) is required as a cofactor.

The protein localises to the cytoplasm. It carries out the reaction (R)-4'-phosphopantetheine + ATP + H(+) = 3'-dephospho-CoA + diphosphate. Its pathway is cofactor biosynthesis; coenzyme A biosynthesis; CoA from (R)-pantothenate: step 4/5. Functionally, reversibly transfers an adenylyl group from ATP to 4'-phosphopantetheine, yielding dephospho-CoA (dPCoA) and pyrophosphate. The protein is Phosphopantetheine adenylyltransferase of Lactobacillus johnsonii (strain CNCM I-12250 / La1 / NCC 533).